The following is a 354-amino-acid chain: UDP-3-O-acylglucosamine N-acyltransferase (354 aa).

H245 serves as the catalytic Proton acceptor.

The protein belongs to the transferase hexapeptide repeat family. LpxD subfamily. Homotrimer.

It carries out the reaction a UDP-3-O-[(3R)-3-hydroxyacyl]-alpha-D-glucosamine + a (3R)-hydroxyacyl-[ACP] = a UDP-2-N,3-O-bis[(3R)-3-hydroxyacyl]-alpha-D-glucosamine + holo-[ACP] + H(+). It functions in the pathway bacterial outer membrane biogenesis; LPS lipid A biosynthesis. In terms of biological role, catalyzes the N-acylation of UDP-3-O-acylglucosamine using 3-hydroxyacyl-ACP as the acyl donor. Is involved in the biosynthesis of lipid A, a phosphorylated glycolipid that anchors the lipopolysaccharide to the outer membrane of the cell. In Anaeromyxobacter dehalogenans (strain 2CP-1 / ATCC BAA-258), this protein is UDP-3-O-acylglucosamine N-acyltransferase.